The primary structure comprises 436 residues: Glutamate-1-semialdehyde 2,1-aminomutase (436 aa).

K276 is subject to N6-(pyridoxal phosphate)lysine.

Belongs to the class-III pyridoxal-phosphate-dependent aminotransferase family. HemL subfamily. Homodimer. It depends on pyridoxal 5'-phosphate as a cofactor.

It is found in the cytoplasm. It catalyses the reaction (S)-4-amino-5-oxopentanoate = 5-aminolevulinate. It participates in porphyrin-containing compound metabolism; protoporphyrin-IX biosynthesis; 5-aminolevulinate from L-glutamyl-tRNA(Glu): step 2/2. Its pathway is porphyrin-containing compound metabolism; chlorophyll biosynthesis. The polypeptide is Glutamate-1-semialdehyde 2,1-aminomutase (Synechococcus sp. (strain JA-2-3B'a(2-13)) (Cyanobacteria bacterium Yellowstone B-Prime)).